The chain runs to 474 residues: Bifunctional protein HldE (474 aa).

The segment at 1–321 (MILSSSLRPT…EYLHSSHQGE (321 aa)) is ribokinase. 198–201 (NKKE) is an ATP binding site. The active site involves Asp266. The interval 348–474 (FTNGCFDILH…SAVVKKIQGS (127 aa)) is cytidylyltransferase.

This sequence in the N-terminal section; belongs to the carbohydrate kinase PfkB family. It in the C-terminal section; belongs to the cytidylyltransferase family. Homodimer.

The enzyme catalyses D-glycero-beta-D-manno-heptose 7-phosphate + ATP = D-glycero-beta-D-manno-heptose 1,7-bisphosphate + ADP + H(+). It carries out the reaction D-glycero-beta-D-manno-heptose 1-phosphate + ATP + H(+) = ADP-D-glycero-beta-D-manno-heptose + diphosphate. It participates in nucleotide-sugar biosynthesis; ADP-L-glycero-beta-D-manno-heptose biosynthesis; ADP-L-glycero-beta-D-manno-heptose from D-glycero-beta-D-manno-heptose 7-phosphate: step 1/4. The protein operates within nucleotide-sugar biosynthesis; ADP-L-glycero-beta-D-manno-heptose biosynthesis; ADP-L-glycero-beta-D-manno-heptose from D-glycero-beta-D-manno-heptose 7-phosphate: step 3/4. Functionally, catalyzes the phosphorylation of D-glycero-D-manno-heptose 7-phosphate at the C-1 position to selectively form D-glycero-beta-D-manno-heptose-1,7-bisphosphate. Its function is as follows. Catalyzes the ADP transfer from ATP to D-glycero-beta-D-manno-heptose 1-phosphate, yielding ADP-D-glycero-beta-D-manno-heptose. This is Bifunctional protein HldE from Wolinella succinogenes (strain ATCC 29543 / DSM 1740 / CCUG 13145 / JCM 31913 / LMG 7466 / NCTC 11488 / FDC 602W) (Vibrio succinogenes).